A 150-amino-acid chain; its full sequence is Interferon antagonist OPG027 (150 aa).

Belongs to the orthopoxvirus OPG027 family.

Functionally, inhibits antiviral activity induced by type I interferons. Does not block signal transduction of IFN, but is important to counteract the host antiviral state induced by a pre-treatment with IFN. The sequence is that of Interferon antagonist OPG027 (OPG027) from Homo sapiens (Human).